A 1933-amino-acid chain; its full sequence is WD repeat-containing protein 81 (1933 aa).

The necessary and sufficient for the interaction with SQSTM1 stretch occupies residues 1–643; the sequence is MAQGSRRRKV…TPCESGWTRE (643 aa). Disordered stretches follow at residues 305–334, 663–714, 1038–1057, 1090–1209, 1517–1544, and 1565–1590; these read PSED…RPGC, SIPG…GKIV, CAFG…SGLG, QPQE…EGKE, SLRN…SCLQ, and DSQP…SRNE. The segment covering 314–330 has biased composition (basic and acidic residues); the sequence is SEEKDRTGVKSEKDGEG. Residues 333–610 enclose the BEACH domain; it reads GCPTCQKELR…IPRLLVQPIQ (278 aa). Residues 668–693 show a composition bias toward low complexity; the sequence is AGDQPGSSSSQASPGLLPFSAPSGSR. Composition is skewed to polar residues over residues 1100–1112 and 1131–1140; these read GQLS…SEAS and VKSGDSSQDL. The span at 1145 to 1166 shows a compositional bias: acidic residues; that stretch reads GSEEEEEEEEGCVVLEEEEQDE. 5 WD repeats span residues 1638–1677, 1684–1724, 1776–1815, 1818–1856, and 1903–1933; these read GHTG…DGTS, IYAQ…TLRT, LNPG…VLRG, AHEG…PTHH, and NFRG…RLLA.

This sequence belongs to the WD repeat WDR81 family. As to quaternary structure, interacts with WDR91; involved in early to late endosome cargo transport. Interacts with BECN1; negatively regulates the PI3 kinase/PI3K activity associated with endosomal membranes. Interacts with SQSTM1; the interaction is direct and regulates the interaction of SQSTM1 with ubiquitinated proteins. Interacts with MAP1LC3C; recruits MAP1LC3C to ubiquitinated protein aggregates in the aggrephagy process.

It is found in the early endosome membrane. It localises to the late endosome membrane. The protein localises to the lysosome membrane. Its subcellular location is the cytoplasmic vesicle. The protein resides in the autophagosome membrane. It is found in the mitochondrion. It localises to the cytoplasm. The protein localises to the cytosol. Functions as a negative regulator of the PI3 kinase/PI3K activity associated with endosomal membranes via BECN1, a core subunit of the PI3K complex. By modifying the phosphatidylinositol 3-phosphate/PtdInsP3 content of endosomal membranes may regulate endosome fusion, recycling, sorting and early to late endosome transport. It is for instance, required for the delivery of cargos like BST2/tetherin from early to late endosome and thereby participates indirectly to their degradation by the lysosome. May also play a role in aggrephagy, the macroautophagic degradation of ubiquitinated protein aggregates. In this process, may regulate the interaction of SQSTM1 with ubiquitinated proteins and also recruit MAP1LC3C. May also be involved in maintenance of normal mitochondrial structure and organization. In Rattus norvegicus (Rat), this protein is WD repeat-containing protein 81.